The chain runs to 325 residues: Homoserine O-succinyltransferase (325 aa).

The active-site Acyl-thioester intermediate is cysteine 142. Positions 163 and 191 each coordinate substrate. Histidine 234 serves as the catalytic Proton acceptor. Residue glutamate 236 is part of the active site. Arginine 248 serves as a coordination point for substrate.

This sequence belongs to the MetA family.

The protein resides in the cytoplasm. The enzyme catalyses L-homoserine + succinyl-CoA = O-succinyl-L-homoserine + CoA. It participates in amino-acid biosynthesis; L-methionine biosynthesis via de novo pathway; O-succinyl-L-homoserine from L-homoserine: step 1/1. Functionally, transfers a succinyl group from succinyl-CoA to L-homoserine, forming succinyl-L-homoserine. The chain is Homoserine O-succinyltransferase from Bradyrhizobium japonicum.